The chain runs to 177 residues: Alkyl hydroperoxide reductase AhpD (177 aa).

Catalysis depends on C131, which acts as the Proton donor. C131 and C134 are disulfide-bonded. C134 functions as the Cysteine sulfenic acid (-SOH) intermediate in the catalytic mechanism.

It belongs to the AhpD family. Homotrimer.

It catalyses the reaction N(6)-[(R)-dihydrolipoyl]-L-lysyl-[lipoyl-carrier protein] + a hydroperoxide = N(6)-[(R)-lipoyl]-L-lysyl-[lipoyl-carrier protein] + an alcohol + H2O. In terms of biological role, antioxidant protein with alkyl hydroperoxidase activity. Required for the reduction of the AhpC active site cysteine residues and for the regeneration of the AhpC enzyme activity. The protein is Alkyl hydroperoxide reductase AhpD of Streptomyces avermitilis (strain ATCC 31267 / DSM 46492 / JCM 5070 / NBRC 14893 / NCIMB 12804 / NRRL 8165 / MA-4680).